The primary structure comprises 473 residues: Aspartyl/glutamyl-tRNA(Asn/Gln) amidotransferase subunit B (473 aa).

It belongs to the GatB/GatE family. GatB subfamily. In terms of assembly, heterotrimer of A, B and C subunits.

It carries out the reaction L-glutamyl-tRNA(Gln) + L-glutamine + ATP + H2O = L-glutaminyl-tRNA(Gln) + L-glutamate + ADP + phosphate + H(+). It catalyses the reaction L-aspartyl-tRNA(Asn) + L-glutamine + ATP + H2O = L-asparaginyl-tRNA(Asn) + L-glutamate + ADP + phosphate + 2 H(+). Allows the formation of correctly charged Asn-tRNA(Asn) or Gln-tRNA(Gln) through the transamidation of misacylated Asp-tRNA(Asn) or Glu-tRNA(Gln) in organisms which lack either or both of asparaginyl-tRNA or glutaminyl-tRNA synthetases. The reaction takes place in the presence of glutamine and ATP through an activated phospho-Asp-tRNA(Asn) or phospho-Glu-tRNA(Gln). This Mycoplasmopsis synoviae (strain 53) (Mycoplasma synoviae) protein is Aspartyl/glutamyl-tRNA(Asn/Gln) amidotransferase subunit B.